The following is a 141-amino-acid chain: Large ribosomal subunit protein uL11 (141 aa).

Belongs to the universal ribosomal protein uL11 family. Part of the ribosomal stalk of the 50S ribosomal subunit. Interacts with L10 and the large rRNA to form the base of the stalk. L10 forms an elongated spine to which L12 dimers bind in a sequential fashion forming a multimeric L10(L12)X complex. Post-translationally, one or more lysine residues are methylated.

Its function is as follows. Forms part of the ribosomal stalk which helps the ribosome interact with GTP-bound translation factors. The chain is Large ribosomal subunit protein uL11 from Carboxydothermus hydrogenoformans (strain ATCC BAA-161 / DSM 6008 / Z-2901).